The sequence spans 238 residues: ATP-dependent dethiobiotin synthetase BioD (238 aa).

12-17 (GVGKTV) is a binding site for ATP. Thr16 contributes to the Mg(2+) binding site. Residue Lys37 is part of the active site. Substrate is bound at residue Thr41. Residues Asp50, 109-112 (EGAG), 170-171 (GS), and 200-202 (PAG) each bind ATP. Asp50 and Glu109 together coordinate Mg(2+).

Belongs to the dethiobiotin synthetase family. In terms of assembly, homodimer. Requires Mg(2+) as cofactor.

Its subcellular location is the cytoplasm. The catalysed reaction is (7R,8S)-7,8-diammoniononanoate + CO2 + ATP = (4R,5S)-dethiobiotin + ADP + phosphate + 3 H(+). It functions in the pathway cofactor biosynthesis; biotin biosynthesis; biotin from 7,8-diaminononanoate: step 1/2. Catalyzes a mechanistically unusual reaction, the ATP-dependent insertion of CO2 between the N7 and N8 nitrogen atoms of 7,8-diaminopelargonic acid (DAPA, also called 7,8-diammoniononanoate) to form a ureido ring. This Frankia casuarinae (strain DSM 45818 / CECT 9043 / HFP020203 / CcI3) protein is ATP-dependent dethiobiotin synthetase BioD.